Consider the following 1488-residue polypeptide: Phenolphthiocerol/phthiocerol polyketide synthase subunit E (1488 aa).

The 434-residue stretch at glutamate 5–glutamate 438 folds into the Ketosynthase family 3 (KS3) domain. Catalysis depends on for beta-ketoacyl synthase activity residues cysteine 184, histidine 320, and histidine 361. Residues valine 551–valine 868 are acyltransferase. Residue serine 641 is the For malonyltransferase activity of the active site. The Carrier domain occupies asparagine 930–phenylalanine 1004. Serine 965 carries the post-translational modification O-(pantetheine 4'-phosphoryl)serine. Glutamate 1286–leucine 1331 is a binding site for NADP(+).

Requires NADP(+) as cofactor. It depends on pantetheine 4'-phosphate as a cofactor.

The enzyme catalyses icosanoyl-[(phenol)carboxyphthiodiolenone synthase] + 2 (S)-methylmalonyl-CoA + 3 malonyl-CoA + 5 NADPH + 10 H(+) = C32-carboxyphthiodiolenone-[(phenol)carboxyphthiodiolenone synthase] + 5 CO2 + 5 NADP(+) + 5 CoA + 2 H2O. It catalyses the reaction docosanoyl-[(phenol)carboxyphthiodiolenone synthase] + 2 (S)-methylmalonyl-CoA + 3 malonyl-CoA + 5 NADPH + 10 H(+) = C34-carboxyphthiodiolenone-[(phenol)carboxyphthiodiolenone synthase] + 5 CO2 + 5 NADP(+) + 5 CoA + 2 H2O. The catalysed reaction is 17-(4-hydroxyphenyl)heptadecanoyl-[(phenol)carboxyphthiodiolenone synthase] + 2 (S)-methylmalonyl-CoA + 3 malonyl-CoA + 5 NADPH + 10 H(+) = C35-(phenol)carboxyphthiodiolenone-[(phenol)carboxyphthiodiolenone synthase] + 5 CO2 + 5 NADP(+) + 5 CoA + 2 H2O. It carries out the reaction 19-(4-hydroxyphenyl)nonadecanoyl-[(phenol)carboxyphthiodiolenone synthase] + 2 (S)-methylmalonyl-CoA + 3 malonyl-CoA + 5 NADPH + 10 H(+) = C37-(phenol)carboxyphthiodiolenone-[(phenol)carboxyphthiodiolenone synthase] + 5 CO2 + 5 NADP(+) + 5 CoA + 2 H2O. The protein operates within lipid metabolism; fatty acid biosynthesis. Functionally, part of the PpsABCDE complex involved in the biosynthesis of the lipid core common to phthiocerols and phenolphthiocerols by successive additions of malonyl-CoA or methylmalonyl-CoA extender units. PpsA can accept as substrate the activated forms of either icosanoyl (C20), docosanoyl (C22) or lignoceroyl (C24) groups from FadD26, or a (4-hydroxyphenyl)-C17 or (4-hydroxyphenyl)-C19 fatty acyl from FadD29. PpsA initiates the biosynthesis and extends its substrate using a malonyl-CoA extender unit. The PpsB and PpsC proteins add the second and third malonyl-CoA extender units. PpsD adds an (R)-methylmalonyl unit and PpsE adds a second (R)-methylmalonyl unit. The incorporation of the methylmalonyl units results in formation of two branched methyl groups in the elongated product. This chain is Phenolphthiocerol/phthiocerol polyketide synthase subunit E (ppsE), found in Mycobacterium tuberculosis (strain CDC 1551 / Oshkosh).